The sequence spans 671 residues: UvrABC system protein C (671 aa).

One can recognise a GIY-YIG domain in the interval valine 16–valine 95. Residues aspartate 208 to alanine 243 enclose the UVR domain. A disordered region spans residues serine 645–threonine 671.

The protein belongs to the UvrC family. Interacts with UvrB in an incision complex.

It localises to the cytoplasm. In terms of biological role, the UvrABC repair system catalyzes the recognition and processing of DNA lesions. UvrC both incises the 5' and 3' sides of the lesion. The N-terminal half is responsible for the 3' incision and the C-terminal half is responsible for the 5' incision. This is UvrABC system protein C from Mycobacteroides abscessus (strain ATCC 19977 / DSM 44196 / CCUG 20993 / CIP 104536 / JCM 13569 / NCTC 13031 / TMC 1543 / L948) (Mycobacterium abscessus).